Reading from the N-terminus, the 467-residue chain is MSSPNIWSTGSSVYSTPVFSQKMTVWILLLLSLYPGFTSQKSDDDYEDYASNKTWVLTPKVPEGDVTVILNNLLEGYDNKLRPDIGVKPTLIHTDMYVNSIGPVNAINMEYTIDIFFAQTWYDRRLKFNSTIKVLRLNSNMVGKIWIPDTFFRNSKKADAHWITTPNRMLRIWNDGRVLYTLRLTIDAECQLQLHNFPMDEHSCPLEFSSYGYPREEIVYQWKRSSVEVGDTRSWRLYQFSFVGLRNTTEVVKTTSGDYVVMSVYFDLSRRMGYFTIQTYIPCTLIVVLSWVSFWINKDAVPARTSLGITTVLTMTTLSTIARKSLPKVSYVTAMDLFVSVCFIFVFSALVEYGTLHYFVSNRKPSKDKDKKKKNPAPTIDIRPRSATIQMNNATHLQERDEEYGYECLDGKDCASFFCCFEDCRTGAWRHGRIHIRIAKMDSYARIFFPTAFCLFNLVYWVSYLYL.

Positions 1–39 are cleaved as a signal peptide; the sequence is MSSPNIWSTGSSVYSTPVFSQKMTVWILLLLSLYPGFTS. Residues 40 to 275 lie on the Extracellular side of the membrane; the sequence is QKSDDDYEDY…FDLSRRMGYF (236 aa). Residues asparagine 52 and asparagine 129 are each glycosylated (N-linked (GlcNAc...) asparagine). Cysteines 190 and 204 form a disulfide. Asparagine 247 carries an N-linked (GlcNAc...) asparagine glycan. A helical transmembrane segment spans residues 276–296; sequence TIQTYIPCTLIVVLSWVSFWI. Residues 297–302 are Cytoplasmic-facing; sequence NKDAVP. A helical membrane pass occupies residues 303–322; the sequence is ARTSLGITTVLTMTTLSTIA. Over 323-334 the chain is Extracellular; that stretch reads RKSLPKVSYVTA. A helical transmembrane segment spans residues 335-359; the sequence is MDLFVSVCFIFVFSALVEYGTLHYF. The Cytoplasmic portion of the chain corresponds to 360–443; that stretch reads VSNRKPSKDK…IHIRIAKMDS (84 aa). The interaction with GABARAP stretch occupies residues 425-442; sequence RTGAWRHGRIHIRIAKMD. Residues 444–464 traverse the membrane as a helical segment; that stretch reads YARIFFPTAFCLFNLVYWVSY. At 465–467 the chain is on the extracellular side; that stretch reads LYL.

The protein belongs to the ligand-gated ion channel (TC 1.A.9) family. Gamma-aminobutyric acid receptor (TC 1.A.9.5) subfamily. GABRG2 sub-subfamily. Heteropentamer, formed by a combination of alpha (GABRA1-6), beta (GABRB1-3), gamma (GABRG1-3), delta (GABRD), epsilon (GABRE), rho (GABRR1-3), pi (GABRP) and theta (GABRQ) chains, each subunit exhibiting distinct physiological and pharmacological properties. Interacts with GABARAP. Interacts with KIF21B. Identified in a complex of 720 kDa composed of LHFPL4, NLGN2, GABRA1, GABRB2, GABRG2 and GABRB3. Interacts with LHFPL4. Interacts with SHISA7; interaction leads to the regulation of GABA(A) receptor trafficking, channel deactivation kinetics and pharmacology. Palmitoylated by ZDHHC3/GODZ; required for the accumulation of GABA(A) receptors at the postsynaptic membrane of inhibitory GABAergic synapses. In terms of processing, glycosylated.

It localises to the postsynaptic cell membrane. The protein resides in the cell membrane. Its subcellular location is the cell projection. It is found in the dendrite. The protein localises to the cytoplasmic vesicle membrane. It carries out the reaction chloride(in) = chloride(out). Its activity is regulated as follows. Allosterically activated by benzodiazepines. Activated by pentobarbital. Inhibited by the antagonist bicuculline. Inhibited by zinc ions. Potentiated by histamine. Functionally, gamma subunit of the heteropentameric ligand-gated chloride channel gated by gamma-aminobutyric acid (GABA), a major inhibitory neurotransmitter in the brain. GABA-gated chloride channels, also named GABA(A) receptors (GABAAR), consist of five subunits arranged around a central pore and contain GABA active binding site(s) located at the alpha and beta subunit interface(s). When activated by GABA, GABAARs selectively allow the flow of chloride anions across the cell membrane down their electrochemical gradient. Gamma-2/GABRG2-containing GABAARs are found at both synaptic and extrasynaptic sites. Chloride influx into the postsynaptic neuron following GABAAR opening decreases the neuron ability to generate a new action potential, thereby reducing nerve transmission. GABAARs containing alpha-1 and beta-2 or -3 subunits exhibit synaptogenic activity; the gamma-2 subunit being necessary but not sufficient to induce rapid synaptic contacts formation. Extrasynaptic gamma-2-containing receptors contribute to the tonic GABAergic inhibition. GABAARs function also as histamine receptor where histamine binds at the interface of two neighboring beta subunits and potentiates GABA response in a gamma-2 subunit-controlled manner. This chain is Gamma-aminobutyric acid receptor subunit gamma-2 (GABRG2), found in Pongo abelii (Sumatran orangutan).